Reading from the N-terminus, the 609-residue chain is Putative 4-coumarate--CoA ligase-like 8 (609 aa).

The ATP site is built by Ser194, Ser195, Gly196, Thr197, Thr198, and Lys202. Residues Phe252 and Ser256 each coordinate (E)-4-coumaroyl-AMP. Arg274 lines the CoA pocket. Positions 276–348 (SVEKTMAAVE…SCFPAVNLGQ (73 aa)) are SBD1. (E)-4-coumaroyl-AMP is bound by residues Gly326, Gln348, Thr353, and Met361. The ATP site is built by Gln348 and Thr353. Residues 349–450 (CYGLTETTGI…VRGPSTMRGY (102 aa)) form an SBD2 region. Residues Asp482 and Arg497 each coordinate ATP. Lys499 and Lys503 together coordinate (E)-4-coumaroyl-AMP. Residue Ala506 participates in CoA binding. Position 589 (Lys589) interacts with ATP.

The protein belongs to the ATP-dependent AMP-binding enzyme family. Mg(2+) is required as a cofactor.

It catalyses the reaction (E)-4-coumarate + ATP + CoA = (E)-4-coumaroyl-CoA + AMP + diphosphate. The enzyme catalyses (E)-4-coumarate + ATP + H(+) = (E)-4-coumaroyl-AMP + diphosphate. The catalysed reaction is (E)-4-coumaroyl-AMP + CoA = (E)-4-coumaroyl-CoA + AMP + H(+). Functionally, carboxylate--CoA ligase that may use 4-coumarate as substrate. Follows a two-step reaction mechanism, wherein the carboxylate substrate first undergoes adenylation by ATP, followed by a thioesterification in the presence of CoA to yield the final CoA thioester. The protein is Putative 4-coumarate--CoA ligase-like 8 (4CLL8) of Oryza sativa subsp. japonica (Rice).